The following is a 218-amino-acid chain: Adenylate kinase (218 aa).

10 to 15 (GAGKGT) provides a ligand contact to ATP. Positions 30–59 (STGDMLRNAAKEGKPLGLEAKKIMDAGQLV) are NMP. Residues Thr-31, Arg-36, 57–59 (QLV), 85–88 (GFPR), and Gln-92 contribute to the AMP site. The tract at residues 122–159 (GRRVHLASGRSYHVMFNPPKQEGLDDATGEPLVQRADD) is LID. Residues Arg-123 and 132–133 (SY) each bind ATP. AMP is bound by residues Arg-156 and Arg-167. Position 203 (Gly-203) interacts with ATP.

This sequence belongs to the adenylate kinase family. In terms of assembly, monomer.

It localises to the cytoplasm. The catalysed reaction is AMP + ATP = 2 ADP. The protein operates within purine metabolism; AMP biosynthesis via salvage pathway; AMP from ADP: step 1/1. Its function is as follows. Catalyzes the reversible transfer of the terminal phosphate group between ATP and AMP. Plays an important role in cellular energy homeostasis and in adenine nucleotide metabolism. In Chlorobium chlorochromatii (strain CaD3), this protein is Adenylate kinase.